Consider the following 220-residue polypeptide: Uracil-DNA glycosylase (220 aa).

Asp65 serves as the catalytic Proton acceptor.

The protein belongs to the uracil-DNA glycosylase (UDG) superfamily. UNG family.

The protein localises to the cytoplasm. The enzyme catalyses Hydrolyzes single-stranded DNA or mismatched double-stranded DNA and polynucleotides, releasing free uracil.. Its function is as follows. Excises uracil residues from the DNA which can arise as a result of misincorporation of dUMP residues by DNA polymerase or due to deamination of cytosine. In Leuconostoc mesenteroides subsp. mesenteroides (strain ATCC 8293 / DSM 20343 / BCRC 11652 / CCM 1803 / JCM 6124 / NCDO 523 / NBRC 100496 / NCIMB 8023 / NCTC 12954 / NRRL B-1118 / 37Y), this protein is Uracil-DNA glycosylase.